The following is a 284-amino-acid chain: MNIKGSDNGSFIKGSPENDIIDGGKKNDWIDAGNGDDRIKAGDGQDSITAGPGHDIVWAGKGSDVIHADGGDDLLYSDASYPLYVTDPHRVIPHSGEGDDVLYAGPGSDILVAGDGADVLTGGDDGDAFVFRFHDPMVGTTHCYTSVMDFDTKQDRFVLDAADFGGDRNLFDANFINHSKGFPGEFVDTFYNGAAEGAHGEHVVVITDRGFASAAAAATAIDHEARGDIIVFHDQKTLGQDGETHGATLAYVDSANHAHAFAHVDNLHDMSDLTSLTAENFGFI.

Residues 1–27 (MNIKGSDNGSFIKGSPENDIIDGGKKN) form a disordered region. Hemolysin-type calcium-binding repeat units lie at residues 13–30 (KGSP…NDWI), 31–48 (DAGN…QDSI), 58–75 (WAGK…DDLL), 94–111 (HSGE…SDIL), and 112–129 (VAGD…GDAF). Ca(2+) contacts are provided by aspartate 100, aspartate 109, aspartate 118, and aspartate 127. The interval 208-222 (DRGFASAAAAATAID) is export signal (aspartic acid box).

It localises to the secreted. Its function is as follows. The NodO protein may play a role in nodule development by direct interaction with the root hair cells or some other plant surface in a calcium-dependent manner. In Rhizobium leguminosarum bv. viciae, this protein is Nodulation protein O (nodO).